Consider the following 271-residue polypeptide: Glutamate racemase (271 aa).

Substrate is bound by residues 10–11 and 42–43; these read DS and YG. The active-site Proton donor/acceptor is C73. Substrate is bound at residue 74–75; that stretch reads NT. The Proton donor/acceptor role is filled by C183. 184–185 lines the substrate pocket; that stretch reads TH.

Belongs to the aspartate/glutamate racemases family.

It catalyses the reaction L-glutamate = D-glutamate. The protein operates within cell wall biogenesis; peptidoglycan biosynthesis. Provides the (R)-glutamate required for cell wall biosynthesis. The polypeptide is Glutamate racemase (Streptococcus thermophilus (strain ATCC BAA-250 / LMG 18311)).